A 670-amino-acid polypeptide reads, in one-letter code: DNA ligase (670 aa).

Residues 32–36 (DSEYD), 81–82 (SL), and E114 each bind NAD(+). The active-site N6-AMP-lysine intermediate is K116. The NAD(+) site is built by R137, E174, K291, and K315. Zn(2+)-binding residues include C409, C412, C427, and C433. A BRCT domain is found at 592 to 670 (ASENLFKDKT…EEEFLAQITR (79 aa)).

This sequence belongs to the NAD-dependent DNA ligase family. LigA subfamily. Mg(2+) serves as cofactor. The cofactor is Mn(2+).

The enzyme catalyses NAD(+) + (deoxyribonucleotide)n-3'-hydroxyl + 5'-phospho-(deoxyribonucleotide)m = (deoxyribonucleotide)n+m + AMP + beta-nicotinamide D-nucleotide.. DNA ligase that catalyzes the formation of phosphodiester linkages between 5'-phosphoryl and 3'-hydroxyl groups in double-stranded DNA using NAD as a coenzyme and as the energy source for the reaction. It is essential for DNA replication and repair of damaged DNA. The polypeptide is DNA ligase (Haemophilus influenzae (strain 86-028NP)).